The sequence spans 690 residues: Rho guanine nucleotide exchange factor 4 (690 aa).

Residues K73–A126 are ABR (APC-binding region) domain. A disordered region spans residues L113–P145. Positions G194 to N253 constitute an SH3 domain. The tract at residues P257–D282 is disordered. In terms of domain architecture, DH spans M284 to R468. One can recognise a PH domain in the interval E499 to E606.

Isoform 3 interacts with RHOA and RAC1, and (via ABR domain) with APC. Found in a complex consisting of ARHGEF4, APC and CTNNB1. Expressed at high levels in the brain, skeletal muscle and testis and at low levels in the kidney, lung, small intestine, ovary and prostate. Expression is aberrantly enhanced in most colorectal tumors.

Its subcellular location is the cytoplasm. It is found in the cell projection. The protein resides in the ruffle membrane. In terms of biological role, acts as a guanine nucleotide exchange factor (GEF) for RHOA, RAC1 and CDC42 GTPases. Binding of APC may activate RAC1 GEF activity. The APC-ARHGEF4 complex seems to be involved in cell migration as well as in E-cadherin-mediated cell-cell adhesion. Required for MMP9 up-regulation via the JNK signaling pathway in colorectal tumor cells. Involved in tumor angiogenesis and may play a role in intestinal adenoma formation and tumor progression. The polypeptide is Rho guanine nucleotide exchange factor 4 (ARHGEF4) (Homo sapiens (Human)).